Consider the following 186-residue polypeptide: Peptide deformylase (186 aa).

Positions 113 and 156 each coordinate Fe cation. The active site involves glutamate 157. Histidine 160 is a Fe cation binding site.

Belongs to the polypeptide deformylase family. It depends on Fe(2+) as a cofactor.

It carries out the reaction N-terminal N-formyl-L-methionyl-[peptide] + H2O = N-terminal L-methionyl-[peptide] + formate. Functionally, removes the formyl group from the N-terminal Met of newly synthesized proteins. Requires at least a dipeptide for an efficient rate of reaction. N-terminal L-methionine is a prerequisite for activity but the enzyme has broad specificity at other positions. The polypeptide is Peptide deformylase (Levilactobacillus brevis (strain ATCC 367 / BCRC 12310 / CIP 105137 / JCM 1170 / LMG 11437 / NCIMB 947 / NCTC 947) (Lactobacillus brevis)).